A 201-amino-acid polypeptide reads, in one-letter code: ATP-dependent Clp protease proteolytic subunit 2 (201 aa).

The active-site Nucleophile is Ser101. His126 is a catalytic residue.

Belongs to the peptidase S14 family. In terms of assembly, fourteen ClpP subunits assemble into 2 heptameric rings which stack back to back to give a disk-like structure with a central cavity, resembling the structure of eukaryotic proteasomes.

The protein localises to the cytoplasm. The catalysed reaction is Hydrolysis of proteins to small peptides in the presence of ATP and magnesium. alpha-casein is the usual test substrate. In the absence of ATP, only oligopeptides shorter than five residues are hydrolyzed (such as succinyl-Leu-Tyr-|-NHMec, and Leu-Tyr-Leu-|-Tyr-Trp, in which cleavage of the -Tyr-|-Leu- and -Tyr-|-Trp bonds also occurs).. In terms of biological role, cleaves peptides in various proteins in a process that requires ATP hydrolysis. Has a chymotrypsin-like activity. Plays a major role in the degradation of misfolded proteins. This chain is ATP-dependent Clp protease proteolytic subunit 2, found in Prochlorococcus marinus subsp. pastoris (strain CCMP1986 / NIES-2087 / MED4).